Reading from the N-terminus, the 113-residue chain is Urotensin-2B (113 aa).

The signal sequence occupies residues 1–27 (MKVFSTSLWCGLLTLLSVMNLFKSVRG). A propeptide spanning residues 28–103 (RPHLSSGHEL…LDNLSSSHTK (76 aa)) is cleaved from the precursor. A disulfide bridge connects residues C107 and C112.

This sequence belongs to the urotensin-2 family.

Its subcellular location is the secreted. Functionally, potent vasoconstrictor. This is Urotensin-2B (Uts2b) from Mus musculus (Mouse).